Here is a 369-residue protein sequence, read N- to C-terminus: Signal recognition particle receptor FtsY (369 aa).

The span at 20–42 (GEENKKEPETRQTDQLESKKEET) shows a compositional bias: basic and acidic residues. The tract at residues 20–58 (GEENKKEPETRQTDQLESKKEETIQQQQNVQQPQAENKI) is disordered. Positions 44-53 (QQQQNVQQPQ) are enriched in low complexity. GTP-binding positions include 180–187 (GVNGVGKT), 262–266 (DTAGR), and 320–323 (TKVD).

Belongs to the GTP-binding SRP family. FtsY subfamily. As to quaternary structure, part of the signal recognition particle protein translocation system, which is composed of SRP and FtsY.

It localises to the cell membrane. Its subcellular location is the cytoplasm. It catalyses the reaction GTP + H2O = GDP + phosphate + H(+). Its function is as follows. Involved in targeting and insertion of nascent membrane proteins into the cytoplasmic membrane. Acts as a receptor for the complex formed by the signal recognition particle (SRP) and the ribosome-nascent chain (RNC). In Sulfolobus acidocaldarius (strain ATCC 33909 / DSM 639 / JCM 8929 / NBRC 15157 / NCIMB 11770), this protein is Signal recognition particle receptor FtsY.